Consider the following 445-residue polypeptide: Secretin receptor (445 aa).

An N-terminal signal peptide occupies residues methionine 1–alanine 21. The Extracellular segment spans residues histidine 22–lysine 137. 3 disulfide bridges follow: cysteine 44-cysteine 71, cysteine 62-cysteine 103, and cysteine 85-cysteine 119. N-linked (GlcNAc...) asparagine glycans are attached at residues asparagine 68, asparagine 96, asparagine 102, and asparagine 124. The helical transmembrane segment at leucine 138 to phenylalanine 163 threads the bilayer. Residues arginine 164 to arginine 170 lie on the Cytoplasmic side of the membrane. Residues asparagine 171–lysine 191 traverse the membrane as a helical segment. Residues aspartate 192–lysine 212 lie on the Extracellular side of the membrane. The cysteines at positions 211 and 281 are disulfide-linked. The chain crosses the membrane as a helical span at residues leucine 213–tyrosine 235. The Cytoplasmic portion of the chain corresponds to leucine 236 to cysteine 250. Residues leucine 251–threonine 272 traverse the membrane as a helical segment. The Extracellular portion of the chain corresponds to arginine 273–asparagine 287. A helical membrane pass occupies residues alanine 288–asparagine 311. Over isoleucine 312–leucine 336 the chain is Cytoplasmic. Residues alanine 337–isoleucine 352 traverse the membrane as a helical segment. Topologically, residues valine 353–glutamate 363 are extracellular. Residues isoleucine 364–leucine 387 traverse the membrane as a helical segment. Residues asparagine 388–isoleucine 445 lie on the Cytoplasmic side of the membrane.

The protein belongs to the G-protein coupled receptor 2 family. In terms of processing, phosphorylated on Ser and Thr residues at the cytoplasmic C-terminus by G protein-coupled receptor kinases (GRKs).

It is found in the cell membrane. The protein resides in the basolateral cell membrane. Its function is as follows. G protein-coupled receptor activated by secretin (SCT), which is involved in different processes such as regulation of the pH of the duodenal content, food intake and water homeostasis. Ligand binding causes a conformation change that triggers signaling via guanine nucleotide-binding proteins (G proteins) and activates cAMP-dependent pathway. Upon binding to secretin, regulates the pH of the duodenum by (1) inhibiting the secretion of gastric acid from the parietal cells of the stomach and (2) stimulating the production of bicarbonate (NaHCO(3)) from the ductal cells of the pancreas. In addition to regulating the pH of the duodenal content, plays a central role in diet induced thermogenesis: acts as a non-sympathetic brown fat (BAT) activator mediating prandial thermogenesis, which consequentially induces satiation. Mechanistically, secretin released by the gut after a meal binds to secretin receptor (SCTR) in brown adipocytes, activating brown fat thermogenesis by stimulating lipolysis, which is sensed in the brain and promotes satiation. Also able to stimulate lipolysis in white adipocytes. Also plays an important role in cellular osmoregulation by regulating renal water reabsorption. Also plays a role in the central nervous system: required for synaptic plasticity. The sequence is that of Secretin receptor (SCTR) from Oryctolagus cuniculus (Rabbit).